The following is a 312-amino-acid chain: MAQRKKIALIGAGQIGGTLALLAGQKELGDVVLVDIMEGVAKGKALDLQETRGVGKWDVDVTGGGTTDYSVIRDADVCIVTAGVPRKPGMSREDLLKVNLDAITKVAHGIKQYAPNAFVIVITNPLDSMVYAMYKVTGFPKNRVVGMAGVLDTARFQYFVGDAAGVSPQDVQAMVLGGHGDDMVPLLRYSSVAGVPLTRLLDKAKLDAIVERTRKGGGEIVALLGTGSAFYAPAASAIAMAESYLRDKKRVLPCSALLEGQYGVKGLFVGVPVVIGAGGVERVLELELNDDERAMLQRSVDSVKKSVAETKL.

NAD(+) contacts are provided by residues 11 to 16 and aspartate 35; that span reads GAGQIG. Substrate-binding residues include arginine 86 and arginine 92. NAD(+)-binding positions include asparagine 99 and 122–124; that span reads ITN. Positions 124 and 155 each coordinate substrate. Histidine 179 serves as the catalytic Proton acceptor.

Belongs to the LDH/MDH superfamily. MDH type 3 family.

The catalysed reaction is (S)-malate + NAD(+) = oxaloacetate + NADH + H(+). Functionally, catalyzes the reversible oxidation of malate to oxaloacetate. The polypeptide is Malate dehydrogenase 1 (Anaeromyxobacter dehalogenans (strain 2CP-C)).